Here is a 226-residue protein sequence, read N- to C-terminus: 2-C-methyl-D-erythritol 4-phosphate cytidylyltransferase (226 aa).

Belongs to the IspD/TarI cytidylyltransferase family. IspD subfamily.

The enzyme catalyses 2-C-methyl-D-erythritol 4-phosphate + CTP + H(+) = 4-CDP-2-C-methyl-D-erythritol + diphosphate. The protein operates within isoprenoid biosynthesis; isopentenyl diphosphate biosynthesis via DXP pathway; isopentenyl diphosphate from 1-deoxy-D-xylulose 5-phosphate: step 2/6. Catalyzes the formation of 4-diphosphocytidyl-2-C-methyl-D-erythritol from CTP and 2-C-methyl-D-erythritol 4-phosphate (MEP). The chain is 2-C-methyl-D-erythritol 4-phosphate cytidylyltransferase from Thermosipho africanus (strain TCF52B).